Reading from the N-terminus, the 425-residue chain is Adenylosuccinate synthetase (425 aa).

Residues 12-18 and 40-42 each bind GTP; these read GDEGKGK and GHT. The active-site Proton acceptor is the Asp-13. Mg(2+) is bound by residues Asp-13 and Gly-40. Residues 13-16, 38-41, Thr-130, Arg-144, Gln-224, Thr-239, and Arg-301 each bind IMP; these read DEGK and NAGH. The active-site Proton donor is His-41. 297-303 serves as a coordination point for substrate; that stretch reads TVSNRRR. GTP contacts are provided by residues Arg-303, 329 to 331, and 411 to 413; these read KLD and STS.

The protein belongs to the adenylosuccinate synthetase family. As to quaternary structure, homodimer. Mg(2+) serves as cofactor.

The protein localises to the cytoplasm. The catalysed reaction is IMP + L-aspartate + GTP = N(6)-(1,2-dicarboxyethyl)-AMP + GDP + phosphate + 2 H(+). It functions in the pathway purine metabolism; AMP biosynthesis via de novo pathway; AMP from IMP: step 1/2. Plays an important role in the de novo pathway of purine nucleotide biosynthesis. Catalyzes the first committed step in the biosynthesis of AMP from IMP. The polypeptide is Adenylosuccinate synthetase (Wolbachia sp. subsp. Drosophila simulans (strain wRi)).